The following is a 341-amino-acid chain: Anthranilate phosphoribosyltransferase (341 aa).

Residues G83, 86 to 87, T91, 93 to 96, 111 to 119, and S123 each bind 5-phospho-alpha-D-ribose 1-diphosphate; these read GD, NIST, and KHGNRGVSS. G83 is an anthranilate binding site. Residue S95 coordinates Mg(2+). Position 114 (N114) interacts with anthranilate. R169 serves as a coordination point for anthranilate. Mg(2+) contacts are provided by D228 and E229.

This sequence belongs to the anthranilate phosphoribosyltransferase family. In terms of assembly, homodimer. Mg(2+) serves as cofactor.

The enzyme catalyses N-(5-phospho-beta-D-ribosyl)anthranilate + diphosphate = 5-phospho-alpha-D-ribose 1-diphosphate + anthranilate. The protein operates within amino-acid biosynthesis; L-tryptophan biosynthesis; L-tryptophan from chorismate: step 2/5. In terms of biological role, catalyzes the transfer of the phosphoribosyl group of 5-phosphorylribose-1-pyrophosphate (PRPP) to anthranilate to yield N-(5'-phosphoribosyl)-anthranilate (PRA). This Cupriavidus necator (strain ATCC 17699 / DSM 428 / KCTC 22496 / NCIMB 10442 / H16 / Stanier 337) (Ralstonia eutropha) protein is Anthranilate phosphoribosyltransferase.